The sequence spans 127 residues: Small ribosomal subunit protein uS11 (127 aa).

This sequence belongs to the universal ribosomal protein uS11 family. In terms of assembly, part of the 30S ribosomal subunit. Interacts with proteins S7 and S18. Binds to IF-3.

Its function is as follows. Located on the platform of the 30S subunit, it bridges several disparate RNA helices of the 16S rRNA. Forms part of the Shine-Dalgarno cleft in the 70S ribosome. In Streptococcus agalactiae serotype Ia (strain ATCC 27591 / A909 / CDC SS700), this protein is Small ribosomal subunit protein uS11.